The following is a 64-amino-acid chain: MTKGTPSQGKHNKGSNHIVCRRCGRRAFHVRKKVCAACGFGKSSKIKRFAWQWKKVTGKGNRVK.

The Zn(2+) site is built by cysteine 20, cysteine 23, cysteine 35, and cysteine 38. The C4-type zinc-finger motif lies at 20–38 (CRRCGRRAFHVRKKVCAAC).

The protein belongs to the eukaryotic ribosomal protein eL37 family. Zn(2+) is required as a cofactor.

In terms of biological role, binds to the 23S rRNA. This Methanococcus maripaludis (strain C6 / ATCC BAA-1332) protein is Large ribosomal subunit protein eL37.